Here is a 307-residue protein sequence, read N- to C-terminus: 2-dehydropantoate 2-reductase (307 aa).

NADP(+)-binding positions include 7-12 (GSGAMG), asparagine 102, and alanine 128. Asparagine 102 serves as a coordination point for substrate. The active-site Proton donor is lysine 184. Substrate contacts are provided by asparagine 188, asparagine 192, and serine 255. Residue glutamate 268 coordinates NADP(+).

The protein belongs to the ketopantoate reductase family.

Its subcellular location is the cytoplasm. The enzyme catalyses (R)-pantoate + NADP(+) = 2-dehydropantoate + NADPH + H(+). It functions in the pathway cofactor biosynthesis; (R)-pantothenate biosynthesis; (R)-pantoate from 3-methyl-2-oxobutanoate: step 2/2. Catalyzes the NADPH-dependent reduction of ketopantoate into pantoic acid. The chain is 2-dehydropantoate 2-reductase (apbA) from Streptococcus pyogenes serotype M18 (strain MGAS8232).